A 119-amino-acid chain; its full sequence is BLOC-1-related complex subunit 8 (119 aa).

The residue at position 109 (S109) is a Phosphoserine.

Belongs to the BORCS8 family. Component of the BLOC-one-related complex (BORC) which is composed of BLOC1S1, BLOC1S2, BORCS5, BORCS6, BORCS7, BORCS8, KXD1 and SNAPIN.

It localises to the lysosome membrane. Its function is as follows. As part of the BLOC-one-related complex (BORC), it plays a role in the movement and localization of lysosomes at the cell periphery. Associated with the cytosolic face of lysosomes, BORC recruits ARL8B to the lysosomal membrane and couples lysosomes to microtubule plus-end-directed kinesin motors, driving lysosome movement toward the cell periphery. This chain is BLOC-1-related complex subunit 8, found in Homo sapiens (Human).